The primary structure comprises 427 residues: UPF0597 protein CPF_0803 (427 aa).

Belongs to the UPF0597 family.

This Clostridium perfringens (strain ATCC 13124 / DSM 756 / JCM 1290 / NCIMB 6125 / NCTC 8237 / Type A) protein is UPF0597 protein CPF_0803.